The following is a 397-amino-acid chain: Elongation factor Tu (397 aa).

The tr-type G domain occupies 10-206; it reads KPHVNIGTIG…AVDTYIPTPE (197 aa). The tract at residues 19–26 is G1; sequence GHVDHGKT. 19-26 is a binding site for GTP; that stretch reads GHVDHGKT. T26 serves as a coordination point for Mg(2+). The interval 60–64 is G2; the sequence is GITIN. The interval 81-84 is G3; the sequence is DCPG. Residues 81–85 and 136–139 each bind GTP; these read DCPGH and NKSD. The segment at 136-139 is G4; that stretch reads NKSD. The segment at 174-176 is G5; the sequence is SAL.

This sequence belongs to the TRAFAC class translation factor GTPase superfamily. Classic translation factor GTPase family. EF-Tu/EF-1A subfamily. In terms of assembly, monomer.

It is found in the cytoplasm. It carries out the reaction GTP + H2O = GDP + phosphate + H(+). GTP hydrolase that promotes the GTP-dependent binding of aminoacyl-tRNA to the A-site of ribosomes during protein biosynthesis. This Clostridium kluyveri (strain ATCC 8527 / DSM 555 / NBRC 12016 / NCIMB 10680 / K1) protein is Elongation factor Tu.